Here is a 65-residue protein sequence, read N- to C-terminus: Large ribosomal subunit protein bL33c (65 aa).

The protein belongs to the bacterial ribosomal protein bL33 family.

It is found in the plastid. It localises to the chloroplast. This is Large ribosomal subunit protein bL33c (rpl33) from Porphyra purpurea (Red seaweed).